The chain runs to 120 residues: Glycine cleavage system H protein (120 aa).

The Lipoyl-binding domain occupies 17-99 (VATVGITNYA…QGAGWFFKLK (83 aa)). Residue K58 is modified to N6-lipoyllysine.

It belongs to the GcvH family. As to quaternary structure, the glycine cleavage system is composed of four proteins: P, T, L and H. (R)-lipoate serves as cofactor.

The glycine cleavage system catalyzes the degradation of glycine. The H protein shuttles the methylamine group of glycine from the P protein to the T protein. This Rhizobium etli (strain ATCC 51251 / DSM 11541 / JCM 21823 / NBRC 15573 / CFN 42) protein is Glycine cleavage system H protein.